The sequence spans 258 residues: Imidazole glycerol phosphate synthase subunit HisF (258 aa).

Active-site residues include Asp12 and Asp131.

It belongs to the HisA/HisF family. In terms of assembly, heterodimer of HisH and HisF.

It is found in the cytoplasm. It carries out the reaction 5-[(5-phospho-1-deoxy-D-ribulos-1-ylimino)methylamino]-1-(5-phospho-beta-D-ribosyl)imidazole-4-carboxamide + L-glutamine = D-erythro-1-(imidazol-4-yl)glycerol 3-phosphate + 5-amino-1-(5-phospho-beta-D-ribosyl)imidazole-4-carboxamide + L-glutamate + H(+). The protein operates within amino-acid biosynthesis; L-histidine biosynthesis; L-histidine from 5-phospho-alpha-D-ribose 1-diphosphate: step 5/9. IGPS catalyzes the conversion of PRFAR and glutamine to IGP, AICAR and glutamate. The HisF subunit catalyzes the cyclization activity that produces IGP and AICAR from PRFAR using the ammonia provided by the HisH subunit. The protein is Imidazole glycerol phosphate synthase subunit HisF of Paenarthrobacter aurescens (strain TC1).